Reading from the N-terminus, the 273-residue chain is Bis(5'-nucleosyl)-tetraphosphatase, symmetrical (273 aa).

The protein belongs to the Ap4A hydrolase family.

The catalysed reaction is P(1),P(4)-bis(5'-adenosyl) tetraphosphate + H2O = 2 ADP + 2 H(+). Hydrolyzes diadenosine 5',5'''-P1,P4-tetraphosphate to yield ADP. This Aeromonas salmonicida (strain A449) protein is Bis(5'-nucleosyl)-tetraphosphatase, symmetrical.